The following is a 327-amino-acid chain: UDP-glucose 4-epimerase (327 aa).

A substrate-binding site is contributed by T119. Residue Y143 is the Proton acceptor of the active site.

This sequence belongs to the NAD(P)-dependent epimerase/dehydratase family. NAD(+) is required as a cofactor.

The enzyme catalyses UDP-alpha-D-glucose = UDP-alpha-D-galactose. Its pathway is carbohydrate metabolism; galactose metabolism. The protein operates within glycan metabolism; exopolysaccharide biosynthesis. This is UDP-glucose 4-epimerase (exoB) from Rhizobium leguminosarum bv. trifolii.